The chain runs to 212 residues: uncharacterized protein (212 aa).

It belongs to the mimivirus R683/R861 family.

This is an uncharacterized protein from Acanthamoeba polyphaga (Amoeba).